The sequence spans 309 residues: uncharacterized protein (309 aa).

2 disordered regions span residues 1–94 and 286–309; these read IGEV…RQQI and HTRN…PPRG. The span at 30 to 43 shows a compositional bias: pro residues; sequence PAQPPSPAPTPSRT. Positions 58 to 67 are enriched in basic and acidic residues; the sequence is RSKTPDKRSA. Residues 297 to 309 are compositionally biased toward pro residues; that stretch reads KNTPPPLEDPPRG.

This is an uncharacterized protein from Homo sapiens (Human).